The following is a 268-amino-acid chain: Tryptophan synthase alpha chain (268 aa).

Active-site proton acceptor residues include Glu-49 and Asp-60.

It belongs to the TrpA family. In terms of assembly, tetramer of two alpha and two beta chains.

The catalysed reaction is (1S,2R)-1-C-(indol-3-yl)glycerol 3-phosphate + L-serine = D-glyceraldehyde 3-phosphate + L-tryptophan + H2O. It participates in amino-acid biosynthesis; L-tryptophan biosynthesis; L-tryptophan from chorismate: step 5/5. Functionally, the alpha subunit is responsible for the aldol cleavage of indoleglycerol phosphate to indole and glyceraldehyde 3-phosphate. The chain is Tryptophan synthase alpha chain from Xanthomonas axonopodis pv. citri (strain 306).